A 311-amino-acid polypeptide reads, in one-letter code: Ribonuclease HIII (311 aa).

The RNase H type-2 domain maps to 95 to 311 (MSIVGSDEVG…NTEKAFRLLK (217 aa)). Residues aspartate 101, glutamate 102, and aspartate 206 each contribute to the a divalent metal cation site.

The protein belongs to the RNase HII family. RnhC subfamily. Requires Mn(2+) as cofactor. Mg(2+) is required as a cofactor.

It localises to the cytoplasm. The enzyme catalyses Endonucleolytic cleavage to 5'-phosphomonoester.. Endonuclease that specifically degrades the RNA of RNA-DNA hybrids. The polypeptide is Ribonuclease HIII (Bacillus cereus (strain AH187)).